The sequence spans 423 residues: DEHGVDPTGTYHGDSDLQLERINVYYNEATGGRYVPRAILMDLEPGTMDSVRAGPFGQLFRPDNFVFGQTGAGNNWAKGHYTEGAELIDSVLDVVRKEAESCDCLQGFQITHSLGGGTGSGMGTLLISKIREEYPDRVMLTFSVCPSPKVSDTVVEPYNATLSVHQLVENADEVMVLDNEALYDICFRTLKLTTPTYGDLNHLVCACMSGVTSCLRFPGQLNSDLRKLAVNLIPFPRLHFFMIGFAPLTSRGSQQYRALTVPELTQQQFDAKNMMCAADPRHGRYLTASCMFRGRMSTKEVDEQMLNVQNKNSSYFVEWIPNNIKSSVCDIPPKGLKMSACFIGNSTAIQEMFKRIGEQFTAMFRRKAFLHWYTGEGMDEMEFTEAESNMNDLVSEYQQYQDATAEEEGEYDEDEDDEGGDYA.

GTP contacts are provided by glutamate 44, serine 113, glycine 117, threonine 118, glycine 119, asparagine 179, and asparagine 201. Residue glutamate 44 participates in Mg(2+) binding. Positions 394 to 423 (VSEYQQYQDATAEEEGEYDEDEDDEGGDYA) are disordered. Acidic residues predominate over residues 404-423 (TAEEEGEYDEDEDDEGGDYA).

This sequence belongs to the tubulin family. In terms of assembly, dimer of alpha and beta chains. A typical microtubule is a hollow water-filled tube with an outer diameter of 25 nm and an inner diameter of 15 nM. Alpha-beta heterodimers associate head-to-tail to form protofilaments running lengthwise along the microtubule wall with the beta-tubulin subunit facing the microtubule plus end conferring a structural polarity. Microtubules usually have 13 protofilaments but different protofilament numbers can be found in some organisms and specialized cells. The cofactor is Mg(2+).

It is found in the cytoplasm. The protein localises to the cytoskeleton. Tubulin is the major constituent of microtubules, a cylinder consisting of laterally associated linear protofilaments composed of alpha- and beta-tubulin heterodimers. Microtubules grow by the addition of GTP-tubulin dimers to the microtubule end, where a stabilizing cap forms. Below the cap, tubulin dimers are in GDP-bound state, owing to GTPase activity of alpha-tubulin. This chain is Tubulin beta-2 chain (TUBB2), found in Oomycete-like sp. (strain MacKay2000).